The chain runs to 399 residues: Dual-specificity RNA methyltransferase RlmN (399 aa).

Catalysis depends on E122, which acts as the Proton acceptor. The 244-residue stretch at 128–371 (ETDRGTLCVS…VRTPRGRDIL (244 aa)) folds into the Radical SAM core domain. A disulfide bridge links C135 with C374. C142, C146, and C149 together coordinate [4Fe-4S] cluster. Residues 200-201 (GE), S232, 254-256 (SLH), and N331 contribute to the S-adenosyl-L-methionine site. The active-site S-methylcysteine intermediate is C374.

This sequence belongs to the radical SAM superfamily. RlmN family. Requires [4Fe-4S] cluster as cofactor.

The protein resides in the cytoplasm. The catalysed reaction is adenosine(2503) in 23S rRNA + 2 reduced [2Fe-2S]-[ferredoxin] + 2 S-adenosyl-L-methionine = 2-methyladenosine(2503) in 23S rRNA + 5'-deoxyadenosine + L-methionine + 2 oxidized [2Fe-2S]-[ferredoxin] + S-adenosyl-L-homocysteine. The enzyme catalyses adenosine(37) in tRNA + 2 reduced [2Fe-2S]-[ferredoxin] + 2 S-adenosyl-L-methionine = 2-methyladenosine(37) in tRNA + 5'-deoxyadenosine + L-methionine + 2 oxidized [2Fe-2S]-[ferredoxin] + S-adenosyl-L-homocysteine. Its function is as follows. Specifically methylates position 2 of adenine 2503 in 23S rRNA and position 2 of adenine 37 in tRNAs. m2A2503 modification seems to play a crucial role in the proofreading step occurring at the peptidyl transferase center and thus would serve to optimize ribosomal fidelity. The sequence is that of Dual-specificity RNA methyltransferase RlmN from Rhodopseudomonas palustris (strain ATCC BAA-98 / CGA009).